The sequence spans 227 residues: MRLVVGLGNPGPEYERQRHNVGFMAVDLLHRRYGFGPWKRRFQGLTAEGSVAGEKVLLLKPATFMNLSGQAAGEAMRFYKITPDQVLVFHDELDLPPGRVRVKRGGGHGGHNGLRSLDDHVGKDYWRIRIGIGHPGSKERVTGWVLSNFAKAEEQWLEPLLDALVAEAPLLVAGEPEKYASRIALLTQPPKPPKPPKPPKDGAKETAGKGTEAETAKPPGPAAGRTG.

Y14 is a tRNA binding site. H19 functions as the Proton acceptor in the catalytic mechanism. TRNA is bound by residues F64, N66, and N112. Residues 182-227 (RIALLTQPPKPPKPPKPPKDGAKETAGKGTEAETAKPPGPAAGRTG) form a disordered region. A compositionally biased stretch (basic and acidic residues) spans 198-215 (PPKDGAKETAGKGTEAET).

It belongs to the PTH family. In terms of assembly, monomer.

It localises to the cytoplasm. The enzyme catalyses an N-acyl-L-alpha-aminoacyl-tRNA + H2O = an N-acyl-L-amino acid + a tRNA + H(+). In terms of biological role, hydrolyzes ribosome-free peptidyl-tRNAs (with 1 or more amino acids incorporated), which drop off the ribosome during protein synthesis, or as a result of ribosome stalling. Its function is as follows. Catalyzes the release of premature peptidyl moieties from peptidyl-tRNA molecules trapped in stalled 50S ribosomal subunits, and thus maintains levels of free tRNAs and 50S ribosomes. This chain is Peptidyl-tRNA hydrolase, found in Rhodospirillum centenum (strain ATCC 51521 / SW).